A 507-amino-acid chain; its full sequence is MTTVTIKPGAMVLADWADIWRGATIRIDPEAKAGVDAAAATVDRLIASGEAVYGLNTGFGKLAQTRIADDELATLQERLVLSHAAGIGEALDSRIVRLVMALKLASLGRGASGVRWTTIAAMQALLDADVLPVIPSQGSVGASGDLAPLAHMSAALIGAGEATWQGQRMPASDALAKAGLKPVQLGPKEGLALLNGTQTSTALALAGLFEVEAGFQAALVSGALSVDAAKGSVAPFDPRIHSLRGHPGQIDVAAALRGLLDGSGILSSHEGCEKIQDPYCLRCQPQVMGAVLDLLRQAGAVLEREANAVTDNPLIFTDTDEAISGGNFHAEPVAFAADQIAMAACEIGSICERRIALLTDPAVSGLPAFLTPNPGINSGFMIAHVTAAALVSENKQKAYPASVDSIPTSANQEDHVSMATHGAFRLLKMAENLHVVVGIELLCGAQGTDFHAGLTSSPTLETAKATLRKQVPAYGDDRYFATDIANARDLVTGRGLVADAGTLPGIA.

The segment at residues A142 to G144 is a cross-link (5-imidazolinone (Ala-Gly)). 2,3-didehydroalanine (Ser) is present on S143.

It belongs to the PAL/histidase family. In terms of processing, contains an active site 4-methylidene-imidazol-5-one (MIO), which is formed autocatalytically by cyclization and dehydration of residues Ala-Ser-Gly.

It is found in the cytoplasm. The catalysed reaction is L-histidine = trans-urocanate + NH4(+). Its pathway is amino-acid degradation; L-histidine degradation into L-glutamate; N-formimidoyl-L-glutamate from L-histidine: step 1/3. This chain is Histidine ammonia-lyase, found in Maricaulis maris (strain MCS10) (Caulobacter maris).